The sequence spans 161 residues: Nucleotide-binding protein SO_3815 (161 aa).

The protein belongs to the YajQ family.

Functionally, nucleotide-binding protein. The chain is Nucleotide-binding protein SO_3815 from Shewanella oneidensis (strain ATCC 700550 / JCM 31522 / CIP 106686 / LMG 19005 / NCIMB 14063 / MR-1).